Reading from the N-terminus, the 376-residue chain is Alcohol dehydrogenase 6 (376 aa).

7 residues coordinate Zn(2+): Cys47, His69, Cys99, Cys102, Cys105, Cys113, and Cys175. NAD(+)-binding positions include 200 to 205 (GLGGVG), Asp224, Arg229, 293 to 295 (VGA), and Arg371.

It belongs to the zinc-containing alcohol dehydrogenase family. Class-V subfamily. Dimer. The cofactor is Zn(2+).

It is found in the cytoplasm. The enzyme catalyses a primary alcohol + NAD(+) = an aldehyde + NADH + H(+). It carries out the reaction a secondary alcohol + NAD(+) = a ketone + NADH + H(+). Its function is as follows. Alcohol dehydrogenase. Catalyzes the NAD-dependent oxidation of primary alcohols to the corresponding aldehydes. Oxidizes secondary alcohols to the corresponding ketones. This chain is Alcohol dehydrogenase 6 (Adh6), found in Rattus norvegicus (Rat).